Here is a 136-residue protein sequence, read N- to C-terminus: UPF0213 protein AHA_3736 (136 aa).

One can recognise a GIY-YIG domain in the interval 17–92 (SHWFIYMVRT…KQQSKAFKEQ (76 aa)). Residues 114 to 136 (QKRPRYAAAKEGSDNRECQRQVD) are disordered. Residues 124–136 (EGSDNRECQRQVD) show a composition bias toward basic and acidic residues.

The protein belongs to the UPF0213 family.

This chain is UPF0213 protein AHA_3736, found in Aeromonas hydrophila subsp. hydrophila (strain ATCC 7966 / DSM 30187 / BCRC 13018 / CCUG 14551 / JCM 1027 / KCTC 2358 / NCIMB 9240 / NCTC 8049).